Here is a 309-residue protein sequence, read N- to C-terminus: tRNA pseudouridine synthase B (309 aa).

The Nucleophile role is filled by D40.

It belongs to the pseudouridine synthase TruB family. Type 1 subfamily.

It catalyses the reaction uridine(55) in tRNA = pseudouridine(55) in tRNA. Responsible for synthesis of pseudouridine from uracil-55 in the psi GC loop of transfer RNAs. The protein is tRNA pseudouridine synthase B of Mycobacterium avium (strain 104).